A 487-amino-acid polypeptide reads, in one-letter code: Putative sugar kinase YoaC (487 aa).

This sequence belongs to the FGGY kinase family.

The chain is Putative sugar kinase YoaC (yoaC) from Bacillus subtilis (strain 168).